The chain runs to 425 residues: MHITLIGVHQRNTPVTVRERLAFSLRELPDALLALRRYVEEGIILSTCNRVEVCAVTHDSVGGDAALKSFLAEQRGVDQAVFVPSLYIYHNEAVVRHLYRLAAGLDSMVLGEDQIVGQIKEALAIAHASGAIGPVLHRVLHGALAAGKRARTHTGIASGHVSVVSVAIDALRQHADLLKQGRALVIGAGHMAELTLKHLIAEGCSAITVINRTETRASALAQRYGVAWRPWGDLSDALAMSDMVVSCTSAPGIVVSWQMVERAAVGRSVPLLLFDLAVPRDIDQRVVEIPGVHLYDVDALEPICVTNRAMRAAEAQRAEAIIDGEVAKFMEWWVAQQAVPTIRALRERAEAIRDAEIRRALARCPELSPQQRETVVALSTAIINKLLHEPIVALRDPEAGSELVSAVRRLFNIDDATVHPSAKVT.

Substrate contacts are provided by residues 47–50 (TCNR), Ser107, 112–114 (EDQ), and Gln118. The active-site Nucleophile is Cys48. 187–192 (GAGHMA) is a binding site for NADP(+).

This sequence belongs to the glutamyl-tRNA reductase family. As to quaternary structure, homodimer.

The enzyme catalyses (S)-4-amino-5-oxopentanoate + tRNA(Glu) + NADP(+) = L-glutamyl-tRNA(Glu) + NADPH + H(+). It participates in porphyrin-containing compound metabolism; protoporphyrin-IX biosynthesis; 5-aminolevulinate from L-glutamyl-tRNA(Glu): step 1/2. The protein operates within porphyrin-containing compound metabolism; chlorophyll biosynthesis. Catalyzes the NADPH-dependent reduction of glutamyl-tRNA(Glu) to glutamate 1-semialdehyde (GSA). The chain is Glutamyl-tRNA reductase from Roseiflexus castenholzii (strain DSM 13941 / HLO8).